Here is a 212-residue protein sequence, read N- to C-terminus: Thymidylate kinase (212 aa).

10–17 provides a ligand contact to ATP; the sequence is GLEGAGKT.

The protein belongs to the thymidylate kinase family.

The catalysed reaction is dTMP + ATP = dTDP + ADP. Functionally, phosphorylation of dTMP to form dTDP in both de novo and salvage pathways of dTTP synthesis. The protein is Thymidylate kinase of Cronobacter sakazakii (strain ATCC BAA-894) (Enterobacter sakazakii).